Here is a 284-residue protein sequence, read N- to C-terminus: ASC1-like protein 3 (284 aa).

The next 6 helical transmembrane spans lie at 9 to 29, 69 to 89, 108 to 128, 148 to 168, 195 to 215, and 243 to 263; these read SSFF…RFFL, LTYY…EPWS, LMLF…ALVA, ILIG…ILAL, FGLF…FWII, and MLLT…LMIM. Positions 60–267 constitute a TLC domain; it reads VKFSESIWKL…ICLMIMKQLN (208 aa).

The protein localises to the endoplasmic reticulum membrane. Functionally, mediates resistance to sphinganine-analog mycotoxins (SAMs) by restoring the sphingolipid biosynthesis. Could salvage the transport of GPI-anchored proteins from the endoplasmic reticulum to the Golgi apparatus in ceramides-depleted cells after SAM exposure. The protein is ASC1-like protein 3 of Oryza sativa subsp. japonica (Rice).